Reading from the N-terminus, the 513-residue chain is Glutamate--tRNA ligase 2 (513 aa).

The 'HIGH' region signature appears at 11 to 21 (PSPSGFLHIGS). The 'KMSKS' region motif lies at 240–244 (KLSKR). Lys243 contributes to the ATP binding site.

This sequence belongs to the class-I aminoacyl-tRNA synthetase family. Glutamate--tRNA ligase type 1 subfamily. In terms of assembly, monomer.

The protein localises to the cytoplasm. It catalyses the reaction tRNA(Glu) + L-glutamate + ATP = L-glutamyl-tRNA(Glu) + AMP + diphosphate. Its function is as follows. Catalyzes the attachment of glutamate to tRNA(Glu) in a two-step reaction: glutamate is first activated by ATP to form Glu-AMP and then transferred to the acceptor end of tRNA(Glu). This is Glutamate--tRNA ligase 2 from Rickettsia massiliae (strain Mtu5).